We begin with the raw amino-acid sequence, 61 residues long: Short neurotoxin 1 (61 aa).

Cystine bridges form between cysteine 3–cysteine 23, cysteine 17–cysteine 40, cysteine 42–cysteine 53, and cysteine 54–cysteine 59.

Belongs to the three-finger toxin family. Short-chain subfamily. Type I alpha-neurotoxin sub-subfamily. As to expression, expressed by the venom gland.

Its subcellular location is the secreted. In terms of biological role, binds with high affinity to muscular nicotinic acetylcholine receptors (nAChRs) (tested on Torpedo marmorata AChR, Kd=0.07 nM) and with low affinity to neuronal alpha-7/CHRNA7 nAChRs (tested on chimeric receptor, Kd=3 uM) and inhibit acetylcholine from binding to the receptor, thereby impairing neuromuscular transmission. Produces peripheral paralysis by blocking neuromuscular transmission at the postsynaptic site. This chain is Short neurotoxin 1, found in Naja pallida (Red spitting cobra).